The chain runs to 701 residues: Elongation factor G (701 aa).

Residues 8–291 (GRYRNIGIVA…AVIDYLPAPT (284 aa)) enclose the tr-type G domain. GTP is bound by residues 17-24 (AHVDAGKT), 89-93 (DTPGH), and 143-146 (NKMD).

The protein belongs to the TRAFAC class translation factor GTPase superfamily. Classic translation factor GTPase family. EF-G/EF-2 subfamily.

It is found in the cytoplasm. Functionally, catalyzes the GTP-dependent ribosomal translocation step during translation elongation. During this step, the ribosome changes from the pre-translocational (PRE) to the post-translocational (POST) state as the newly formed A-site-bound peptidyl-tRNA and P-site-bound deacylated tRNA move to the P and E sites, respectively. Catalyzes the coordinated movement of the two tRNA molecules, the mRNA and conformational changes in the ribosome. The chain is Elongation factor G from Pseudomonas savastanoi pv. phaseolicola (strain 1448A / Race 6) (Pseudomonas syringae pv. phaseolicola (strain 1448A / Race 6)).